We begin with the raw amino-acid sequence, 150 residues long: Ribosome maturation factor RimP (150 aa).

It belongs to the RimP family.

The protein localises to the cytoplasm. Its function is as follows. Required for maturation of 30S ribosomal subunits. In Salmonella dublin (strain CT_02021853), this protein is Ribosome maturation factor RimP.